The primary structure comprises 323 residues: UPF0200/UPF0201 protein AF_1395 (323 aa).

The UPF0200 stretch occupies residues 1–185; sequence MVLEMKVIAF…EKIRQILLKL (185 aa). Residue 12–19 participates in ATP binding; it reads GYPLSGKS. The tract at residues 186 to 323 is UPF0201; that stretch reads AKNVEIEIRT…GRPVKEIDKL (138 aa).

The protein in the N-terminal section; belongs to the UPF0200 family. In the C-terminal section; belongs to the UPF0201 family.

The protein is UPF0200/UPF0201 protein AF_1395 of Archaeoglobus fulgidus (strain ATCC 49558 / DSM 4304 / JCM 9628 / NBRC 100126 / VC-16).